A 386-amino-acid chain; its full sequence is Succinate--CoA ligase [ADP-forming] subunit beta (386 aa).

Residues 9–244 (KEILRNFGVP…LDEEDPAEVE (236 aa)) enclose the ATP-grasp domain. Residues lysine 46, 53-55 (GRG), glutamate 99, alanine 102, and glutamate 107 each bind ATP. Mg(2+) contacts are provided by asparagine 199 and aspartate 213. Residues asparagine 264 and 321-323 (GIM) contribute to the substrate site.

This sequence belongs to the succinate/malate CoA ligase beta subunit family. In terms of assembly, heterotetramer of two alpha and two beta subunits. Mg(2+) serves as cofactor.

The catalysed reaction is succinate + ATP + CoA = succinyl-CoA + ADP + phosphate. It catalyses the reaction GTP + succinate + CoA = succinyl-CoA + GDP + phosphate. Its pathway is carbohydrate metabolism; tricarboxylic acid cycle; succinate from succinyl-CoA (ligase route): step 1/1. Functionally, succinyl-CoA synthetase functions in the citric acid cycle (TCA), coupling the hydrolysis of succinyl-CoA to the synthesis of either ATP or GTP and thus represents the only step of substrate-level phosphorylation in the TCA. The beta subunit provides nucleotide specificity of the enzyme and binds the substrate succinate, while the binding sites for coenzyme A and phosphate are found in the alpha subunit. This Polaromonas sp. (strain JS666 / ATCC BAA-500) protein is Succinate--CoA ligase [ADP-forming] subunit beta.